The chain runs to 366 residues: Chorismate synthase (366 aa).

Residues Arg-48 and Arg-54 each coordinate NADP(+). Residues Arg-125–Ser-127, Asn-238–Ala-239, Gly-278, Lys-293–Ser-297, and Arg-319 contribute to the FMN site.

Belongs to the chorismate synthase family. In terms of assembly, homotetramer. FMNH2 is required as a cofactor.

It carries out the reaction 5-O-(1-carboxyvinyl)-3-phosphoshikimate = chorismate + phosphate. It functions in the pathway metabolic intermediate biosynthesis; chorismate biosynthesis; chorismate from D-erythrose 4-phosphate and phosphoenolpyruvate: step 7/7. Its function is as follows. Catalyzes the anti-1,4-elimination of the C-3 phosphate and the C-6 proR hydrogen from 5-enolpyruvylshikimate-3-phosphate (EPSP) to yield chorismate, which is the branch point compound that serves as the starting substrate for the three terminal pathways of aromatic amino acid biosynthesis. This reaction introduces a second double bond into the aromatic ring system. The chain is Chorismate synthase from Neisseria gonorrhoeae (strain NCCP11945).